A 231-amino-acid chain; its full sequence is Somatolactin (231 aa).

An N-terminal signal peptide occupies residues M1–S24. 3 cysteine pairs are disulfide-bonded: C29/C39, C89/C205, and C222/C230. 2 N-linked (GlcNAc...) asparagine glycosylation sites follow: N35 and N145.

Belongs to the somatotropin/prolactin family. In terms of tissue distribution, pituitary gland.

It is found in the secreted. The protein is Somatolactin of Siganus guttatus (Orange-spotted spinefoot).